A 208-amino-acid polypeptide reads, in one-letter code: Probable thymidylate kinase (208 aa).

9–16 (GIDGAGKS) is an ATP binding site.

The protein belongs to the thymidylate kinase family.

It catalyses the reaction dTMP + ATP = dTDP + ADP. This Thermococcus gammatolerans (strain DSM 15229 / JCM 11827 / EJ3) protein is Probable thymidylate kinase.